A 139-amino-acid polypeptide reads, in one-letter code: Cytochrome c-type biogenesis protein CcmE (139 aa).

Over 1–7 (MTKRQNR) the chain is Cytoplasmic. A helical; Signal-anchor for type II membrane protein membrane pass occupies residues 8-28 (MTLVALLVIGVSLTGYLGLKA). The Periplasmic portion of the chain corresponds to 29–139 (FNENLLYFFS…ADALEKAKNK (111 aa)). Residues His-120 and Tyr-124 each contribute to the heme site.

It belongs to the CcmE/CycJ family.

Its subcellular location is the cell inner membrane. In terms of biological role, heme chaperone required for the biogenesis of c-type cytochromes. Transiently binds heme delivered by CcmC and transfers the heme to apo-cytochromes in a process facilitated by CcmF and CcmH. The polypeptide is Cytochrome c-type biogenesis protein CcmE (Ruthia magnifica subsp. Calyptogena magnifica).